The chain runs to 363 residues: Actin-related protein 7 (363 aa).

The residue at position 1 (Met1) is an N-acetylmethionine.

The protein belongs to the actin family. Plant ARP7 subfamily. In terms of tissue distribution, mostly expressed in flowers, and, to a lower extent, in roots, seedlings, leaves and siliques (at protein level).

The protein localises to the nucleus. Its subcellular location is the cytoplasm. Its function is as follows. Essential protein required during embryogenesis and all plant development stages, probably through a chromatin-mediated regulation of gene expression. The chain is Actin-related protein 7 (ARP7) from Arabidopsis thaliana (Mouse-ear cress).